We begin with the raw amino-acid sequence, 135 residues long: Mini-ribonuclease 3 (135 aa).

Residue D17 is part of the active site.

Belongs to the MrnC RNase family. As to quaternary structure, homodimer. Requires Mg(2+) as cofactor.

It is found in the cytoplasm. In terms of biological role, involved in correct processing of both the 5' and 3' ends of 23S rRNA precursor. Processes 30S rRNA precursor transcript even in absence of ribonuclease 3 (Rnc); Rnc processes 30S rRNA into smaller rRNA precursors. This chain is Mini-ribonuclease 3, found in Bacillus cereus (strain ATCC 14579 / DSM 31 / CCUG 7414 / JCM 2152 / NBRC 15305 / NCIMB 9373 / NCTC 2599 / NRRL B-3711).